The chain runs to 403 residues: Argininosuccinate synthase (403 aa).

An ATP-binding site is contributed by 10 to 18; the sequence is AYSGGLDTS. Residue tyrosine 87 coordinates L-citrulline. Glycine 117 is a binding site for ATP. Residues threonine 119, asparagine 123, and aspartate 124 each coordinate L-aspartate. An L-citrulline-binding site is contributed by asparagine 123. Residues arginine 127, serine 175, glutamate 260, and tyrosine 272 each contribute to the L-citrulline site.

The protein belongs to the argininosuccinate synthase family. Type 1 subfamily. As to quaternary structure, homotetramer.

It localises to the cytoplasm. The enzyme catalyses L-citrulline + L-aspartate + ATP = 2-(N(omega)-L-arginino)succinate + AMP + diphosphate + H(+). It participates in amino-acid biosynthesis; L-arginine biosynthesis; L-arginine from L-ornithine and carbamoyl phosphate: step 2/3. The sequence is that of Argininosuccinate synthase from Bacillus subtilis (strain 168).